We begin with the raw amino-acid sequence, 418 residues long: D-inositol 3-phosphate glycosyltransferase 1 (418 aa).

UDP-N-acetyl-alpha-D-glucosamine contacts are provided by residues glutamine 24–proline 25 and glycine 32. 1D-myo-inositol 3-phosphate is bound by residues aspartate 29–asparagine 34, lysine 87, histidine 115, serine 139, and glutamine 159. Positions 233 and 238 each coordinate UDP-N-acetyl-alpha-D-glucosamine. 3 residues coordinate Mg(2+): tyrosine 308, arginine 309, and alanine 311. UDP-N-acetyl-alpha-D-glucosamine is bound by residues glutamate 321 and glutamate 329. Mg(2+) is bound at residue threonine 335.

This sequence belongs to the glycosyltransferase group 1 family. MshA subfamily. Homodimer.

It carries out the reaction 1D-myo-inositol 3-phosphate + UDP-N-acetyl-alpha-D-glucosamine = 1D-myo-inositol 2-acetamido-2-deoxy-alpha-D-glucopyranoside 3-phosphate + UDP + H(+). Functionally, catalyzes the transfer of a N-acetyl-glucosamine moiety to 1D-myo-inositol 3-phosphate to produce 1D-myo-inositol 2-acetamido-2-deoxy-glucopyranoside 3-phosphate in the mycothiol biosynthesis pathway. The protein is D-inositol 3-phosphate glycosyltransferase 1 of Catenulispora acidiphila (strain DSM 44928 / JCM 14897 / NBRC 102108 / NRRL B-24433 / ID139908).